Consider the following 475-residue polypeptide: MAMKIDGANFHERVETNLHNTFMRGAVAGAQERLHTRRLEAAEELGNWEEWRALGEEIRQHTLENLDYYLMQLSENVAKRGGHVFFAQTAEEANNYIRNVVIQKNAKKIVKSKSMVTEEINLNAVLEAAGCEVIETDLGEYILQVDDHDPPSHIVAPALHKNKEQIRDVFRQKLGYKQTEKPEELALHARKMLRHEYLTADIGITGCNFAIAESGSITLVTNEGNADLVTALPKTQITVMGMERIVPTFEEMEVLVSLLTRSAVGQKLTSYITVLTGPRDEGDVDGPEEFHLVIVDNGRSNILGTEFQPVLQCIRCAACVNVCPVYRHIGGHSYGSIYSGPIGAVLSPLLGGYDDYKELPYASSLCAACTEACPVKIPLHELLLKHRQVIVEREGKAPISEKLAMKAFGLGASSSFLYKLGSKVAPSALTPFTNDDRISKGPGPLKAWTEIREFPAPNKERFRDWFREHQKGGEK.

4Fe-4S ferredoxin-type domains are found at residues 304–334 and 353–382; these read GTEF…GHSY and YDDY…LHEL. Positions 313, 316, 319, 323, 366, 369, and 373 each coordinate [4Fe-4S] cluster.

The protein belongs to the LutB/YkgF family.

In terms of biological role, is involved in L-lactate degradation and allows cells to grow with lactate as the sole carbon source. Has probably a role as an electron transporter during oxidation of L-lactate. This is Lactate utilization protein B from Geobacillus sp. (strain WCH70).